The following is a 674-amino-acid chain: ATP-dependent DNA helicase Hel308 (674 aa).

ATP is bound by residues Q27 and 44–51 (VPTAAGKT). Positions 31-197 (IEQIRKGRNV…WLDASLIKSD (167 aa)) constitute a Helicase ATP-binding domain. A DEAH box motif is present at residues 142 to 145 (DEIH). Positions 224 to 411 (SINQIIRETV…EAKVRFNTLA (188 aa)) constitute a Helicase C-terminal domain.

Belongs to the helicase family. Hel308 subfamily. Monomer.

The enzyme catalyses Couples ATP hydrolysis with the unwinding of duplex DNA by translocating in the 3'-5' direction.. The catalysed reaction is ATP + H2O = ADP + phosphate + H(+). DNA-dependent ATPase and 3'-5' DNA helicase that may be involved in repair of stalled replication forks. This Thermoplasma acidophilum (strain ATCC 25905 / DSM 1728 / JCM 9062 / NBRC 15155 / AMRC-C165) protein is ATP-dependent DNA helicase Hel308.